We begin with the raw amino-acid sequence, 405 residues long: tRNA-specific 2-thiouridylase MnmA (405 aa).

ATP contacts are provided by residues Ala-41–Ser-48 and Leu-67. Cys-135 acts as the Nucleophile in catalysis. A disulfide bridge connects residues Cys-135 and Cys-231. Gly-159 serves as a coordination point for ATP. Residues Lys-181–Gln-183 are interaction with tRNA. Residue Cys-231 is the Cysteine persulfide intermediate of the active site.

It belongs to the MnmA/TRMU family.

The protein localises to the cytoplasm. The enzyme catalyses S-sulfanyl-L-cysteinyl-[protein] + uridine(34) in tRNA + AH2 + ATP = 2-thiouridine(34) in tRNA + L-cysteinyl-[protein] + A + AMP + diphosphate + H(+). Its function is as follows. Catalyzes the 2-thiolation of uridine at the wobble position (U34) of tRNA, leading to the formation of s(2)U34. The polypeptide is tRNA-specific 2-thiouridylase MnmA (Maricaulis maris (strain MCS10) (Caulobacter maris)).